The sequence spans 245 residues: Probable phosphatase Teth514_1060 (245 aa).

The Zn(2+) site is built by His-8, His-10, His-16, His-41, Glu-74, His-102, His-133, Asp-194, and His-196.

This sequence belongs to the PHP family. Zn(2+) serves as cofactor.

This chain is Probable phosphatase Teth514_1060, found in Thermoanaerobacter sp. (strain X514).